Reading from the N-terminus, the 62-residue chain is Large ribosomal subunit protein bL32 (62 aa).

Residues 1 to 16 (MAVQKNRKTRSKRGMR) show a composition bias toward basic residues. A disordered region spans residues 1 to 62 (MAVQKNRKTR…VISQGDSDDE (62 aa)). Positions 53-62 (VISQGDSDDE) are enriched in polar residues.

It belongs to the bacterial ribosomal protein bL32 family.

The protein is Large ribosomal subunit protein bL32 of Alcanivorax borkumensis (strain ATCC 700651 / DSM 11573 / NCIMB 13689 / SK2).